The primary structure comprises 572 residues: Periplasmic pectate lyase (572 aa).

The N-terminal stretch at 1 to 23 is a signal peptide; sequence MKKRALLLSMSVLAMLYIPAGQA.

It belongs to the polysaccharide lyase 2 family.

The protein resides in the periplasm. It carries out the reaction Eliminative cleavage of (1-&gt;4)-alpha-D-galacturonan to give oligosaccharides with 4-deoxy-alpha-D-galact-4-enuronosyl groups at their non-reducing ends.. It participates in glycan metabolism; pectin degradation; 2-dehydro-3-deoxy-D-gluconate from pectin: step 2/5. The polypeptide is Periplasmic pectate lyase (pelY) (Yersinia pseudotuberculosis serotype I (strain IP32953)).